Reading from the N-terminus, the 99-residue chain is NADH-quinone oxidoreductase subunit K (99 aa).

3 helical membrane-spanning segments follow: residues 3 to 23, 28 to 48, and 59 to 79; these read PENYLYLSALLFTIGAAGVLI, IIVFMCIELMLNASNLAFVTF, and VFAFFTMVVAAAEVVVGLAII.

The protein belongs to the complex I subunit 4L family. NDH-1 is composed of 14 different subunits. Subunits NuoA, H, J, K, L, M, N constitute the membrane sector of the complex.

It is found in the cell membrane. The catalysed reaction is a quinone + NADH + 5 H(+)(in) = a quinol + NAD(+) + 4 H(+)(out). NDH-1 shuttles electrons from NADH, via FMN and iron-sulfur (Fe-S) centers, to quinones in the respiratory chain. The immediate electron acceptor for the enzyme in this species is believed to be a menaquinone. Couples the redox reaction to proton translocation (for every two electrons transferred, four hydrogen ions are translocated across the cytoplasmic membrane), and thus conserves the redox energy in a proton gradient. This Rhodococcus jostii (strain RHA1) protein is NADH-quinone oxidoreductase subunit K.